The sequence spans 329 residues: MTEFIFLLVVIGLIFVFLSVILSFIPLGLWISALAAGVKIGIFTLVGMRLRRVPPDKIVKPLIKAIKAGQDVEINKLEAHYLAGGNVDKVIDALIAAQRANISLEFERAAAIDLAGRDVLHAVQMSVNPKVIETPVVAAVAKDGIEVKVKARVTVRANIDRLVGGAGEETIIARVGEGIVTTVGSSNSHKEVLENPDSISRTVLNKGLDAGTAFEILSIDIADVDVGRNIGARLQIDQAEADKRIAQAKAEERRAMAVAREQEMKAMVQEMRAKVVEAEAEVPKAMAEALRTGKIGVMDYYNMRNVIADTMMRESFSKLGQERQQEEKE.

2 helical membrane-spanning segments follow: residues 5 to 25 (IFLL…LSFI) and 27 to 47 (LGLW…TLVG).

It belongs to the flotillin-like FloA family. In terms of assembly, homooligomerizes.

The protein resides in the cell membrane. It is found in the membrane raft. Its function is as follows. Found in functional membrane microdomains (FMM) that may be equivalent to eukaryotic membrane rafts. FMMs are highly dynamic and increase in number as cells age. Flotillins are thought to be important factors in membrane fluidity. The protein is Flotillin-like protein FloA of Thermoanaerobacter sp. (strain X514).